Consider the following 205-residue polypeptide: Holliday junction branch migration complex subunit RuvA (205 aa).

The segment at 1 to 62 (MFEYVTGYVE…EDIMALYGFK (62 aa)) is domain I. Positions 63-141 (TREERLLFTK…DVVPDAFVDL (79 aa)) are domain II. The segment at 142-152 (FSDTESFDTKK) is flexible linker. Residues 153–205 (GSSVELDEALEALRALGYAEREVSRVVPELLKESLTTDQYIKKALSLLLNGKR) are domain III.

Belongs to the RuvA family. In terms of assembly, homotetramer. Forms an RuvA(8)-RuvB(12)-Holliday junction (HJ) complex. HJ DNA is sandwiched between 2 RuvA tetramers; dsDNA enters through RuvA and exits via RuvB. An RuvB hexamer assembles on each DNA strand where it exits the tetramer. Each RuvB hexamer is contacted by two RuvA subunits (via domain III) on 2 adjacent RuvB subunits; this complex drives branch migration. In the full resolvosome a probable DNA-RuvA(4)-RuvB(12)-RuvC(2) complex forms which resolves the HJ.

Its subcellular location is the cytoplasm. In terms of biological role, the RuvA-RuvB-RuvC complex processes Holliday junction (HJ) DNA during genetic recombination and DNA repair, while the RuvA-RuvB complex plays an important role in the rescue of blocked DNA replication forks via replication fork reversal (RFR). RuvA specifically binds to HJ cruciform DNA, conferring on it an open structure. The RuvB hexamer acts as an ATP-dependent pump, pulling dsDNA into and through the RuvAB complex. HJ branch migration allows RuvC to scan DNA until it finds its consensus sequence, where it cleaves and resolves the cruciform DNA. This is Holliday junction branch migration complex subunit RuvA from Bacillus mycoides (strain KBAB4) (Bacillus weihenstephanensis).